Here is a 464-residue protein sequence, read N- to C-terminus: Chitotriosidase-1 (464 aa).

The signal sequence occupies residues 1 to 21 (MVQSLAWAGVMTLLMVQWGSA). The GH18 domain occupies 22–386 (AKLVCYLTNW…RTLRQELNLP (365 aa)). Cysteines 26 and 51 form a disulfide. Chitin contacts are provided by residues 70–71 (EH) and 97–100 (GGWT). The active-site Proton donor is E140. 210–213 (MAYD) serves as a coordination point for chitin. The cysteines at positions 307 and 368 are disulfide-linked. Residues 385 to 416 (LPSETPRSPEQIIPEPRPSSMPEQGPSPGLDN) are disordered. In terms of domain architecture, Chitin-binding type-2 spans 415-464 (DNFCQGKADGVYPNPGDESTYYNCGGGRLFQQSCPPGLVFRASCKCCTWS). A disulfide bridge connects residues C448 and C461.

Belongs to the glycosyl hydrolase 18 family. Chitinase class II subfamily. Monomer. Highly expressed in tongue, stomach, kidney, brain, skin, testis, and bone marrow. Low level of expression was found in lung, heart, spleen, small intestine, and liver. Not detectable in pancreas, salivary gland, large intestine, uterus, or peripheral blood mononuclear cells (PBMC).

It localises to the secreted. It is found in the lysosome. It carries out the reaction Random endo-hydrolysis of N-acetyl-beta-D-glucosaminide (1-&gt;4)-beta-linkages in chitin and chitodextrins.. Degrades chitin, chitotriose and chitobiose. May participate in the defense against nematodes and other pathogens. This Mus musculus (Mouse) protein is Chitotriosidase-1 (Chit1).